The following is a 272-amino-acid chain: TIP41-like protein (272 aa).

Lys106 is modified (N6-acetyllysine). An interaction with PPP2CA region spans residues 173–272 (RVMPSSFFLL…ADSQKSTQVE (100 aa)). Ser265 bears the Phosphoserine mark.

Belongs to the TIP41 family. Isoform 1 interacts with PPP2CA. Isoform 2 does not interact with PPP2CA. Interacts with PPP2CB, PPP4C and PPP6C. Interacts with IGBP1; the interaction is dependent on PPP2CA. Associates with a protein phosphatase 2A PP2A(C):IGBP1 complex. Interacts with PPP4C and PPP4R2.

It localises to the cytoplasm. Its function is as follows. May be a allosteric regulator of serine/threonine-protein phosphatase 2A (PP2A). Isoform 1 inhibits catalytic activity of the PP2A(D) core complex in vitro. The PP2A(C):TIPRL complex does not show phosphatase activity. Acts as a negative regulator of serine/threonine-protein phosphatase 4 probably by inhibiting the formation of the active PPP4C:PPP4R2 complex; the function is proposed to implicate it in DNA damage response by promoting H2AX phosphorylated on Ser-140 (gamma-H2AX). May play a role in the regulation of ATM/ATR signaling pathway controlling DNA replication and repair. The polypeptide is TIP41-like protein (TIPRL) (Homo sapiens (Human)).